We begin with the raw amino-acid sequence, 215 residues long: UPF0056 membrane protein BU267 (215 aa).

The next 6 helical transmembrane spans lie at 14–34 (FFIGLCALVNPIGMIPIFTTM), 56–76 (LILLISLFFGSNILNIFGISI), 81–101 (IAGGILIISIAFSMISGQFIK), 120–140 (VVPLAMPLIAGPGAISSTIVW), 150–170 (LFLCSLVIFLFSFVCWLCFEA), and 189–209 (IMGLLLMSLGIEFISTGIGAI).

It belongs to the UPF0056 (MarC) family.

The protein localises to the cell membrane. The polypeptide is UPF0056 membrane protein BU267 (Buchnera aphidicola subsp. Acyrthosiphon pisum (strain APS) (Acyrthosiphon pisum symbiotic bacterium)).